The chain runs to 637 residues: Sterol 3-beta-glucosyltransferase UGT80A2 (637 aa).

2 disordered regions span residues 1–29 and 66–112; these read MPEI…RASV and VAES…TERQ. Over residues 13–24 the composition is skewed to low complexity; sequence SSSSSSSSSSSS. Residues 67 to 79 are compositionally biased toward polar residues; sequence AESSGTGNKSFSR. Residues 103–112 show a composition bias toward basic and acidic residues; sequence RLDKSKTERQ.

Belongs to the glycosyltransferase 28 family. In terms of tissue distribution, expressed in roots, cauline leaf epidermal cells, stomata, stamen, pollen and around the base of siliques.

It carries out the reaction a sterol + UDP-alpha-D-glucose = a sterol 3-beta-D-glucoside + UDP + H(+). In terms of biological role, involved in the biosynthesis of sterol glucosides. Catalyzes the synthesis of steryl glycosides (SGs) and acyl steryl glycosides (ASGs) which are the most abundant sterol derivatives in higher plants. Can act on several sterols like sitosterol, campesterol and stigmasterol. Both UGT80A2 and UGT80B1 are required for the normal production of SGs and ASGs in seeds. This is Sterol 3-beta-glucosyltransferase UGT80A2 (UGT80A2) from Arabidopsis thaliana (Mouse-ear cress).